A 283-amino-acid chain; its full sequence is uncharacterized protein (283 aa).

4 helical membrane-spanning segments follow: residues 11–31 (LFAY…YVSA), 35–55 (EGAL…WFGP), 56–76 (IYAL…MMFF), and 93–113 (LVVW…IHDI). Residues 162–283 (NSFVFLLLHM…LENEMMMNEL (122 aa)) enclose the GGDEF domain.

It localises to the cell membrane. This is an uncharacterized protein from Bacillus subtilis (strain 168).